Consider the following 659-residue polypeptide: Protein real-time (659 aa).

The PRELI/MSF1 domain occupies 3-175; it reads QKFQSPVRVY…FIGQLREEGI (173 aa). Residues 286-462 enclose the CRAL-TRIO domain; the sequence is KPAVVVEHFP…FLGGPCKTMI (177 aa). Serine 477 is modified (phosphoserine). Residues 512 to 631 form the GOLD domain; it reads HRNLYKSVDL…QLNVFYEVLS (120 aa).

In terms of tissue distribution, restricted to the developing gut and central nervous system (CNS).

Its subcellular location is the mitochondrion. The chain is Protein real-time (retm) from Drosophila melanogaster (Fruit fly).